A 346-amino-acid chain; its full sequence is Phosphoribosylformylglycinamidine cyclo-ligase (346 aa).

Belongs to the AIR synthase family.

The protein resides in the cytoplasm. The enzyme catalyses 2-formamido-N(1)-(5-O-phospho-beta-D-ribosyl)acetamidine + ATP = 5-amino-1-(5-phospho-beta-D-ribosyl)imidazole + ADP + phosphate + H(+). Its pathway is purine metabolism; IMP biosynthesis via de novo pathway; 5-amino-1-(5-phospho-D-ribosyl)imidazole from N(2)-formyl-N(1)-(5-phospho-D-ribosyl)glycinamide: step 2/2. The sequence is that of Phosphoribosylformylglycinamidine cyclo-ligase from Vibrio vulnificus (strain YJ016).